The sequence spans 251 residues: UPF0309 protein SAV_3856 (251 aa).

In terms of domain architecture, SIS spans 36-220 (IADTVADGGR…AGTLADRGIE (185 aa)).

The protein belongs to the UPF0309 family.

The polypeptide is UPF0309 protein SAV_3856 (Streptomyces avermitilis (strain ATCC 31267 / DSM 46492 / JCM 5070 / NBRC 14893 / NCIMB 12804 / NRRL 8165 / MA-4680)).